A 373-amino-acid chain; its full sequence is MSMRVGILTSGGDSPGLNAAIRGFGKAAVSTYGMELIGFRDGMRGLAENRFMQLDSHALSGILTTGGTILGTSRDKVHKMLVDGKVQNMIPVIKKNYEKNKLDALVCLGGGGTAKNAKRLSDAGMNVITLPKTIDNDLVGTDQTFGFATALEIATDAVDRLHSTAHSHHRIILTEIMGHRAGWLALGAGIAGGADVILLPEVPYNVESIAAAISRRSAHGSNFSVVAVAEGARNERDAAELAAADALVREADSPVARDAAKTHRANVEASHRAHTFTLATELEKATGLESRVTILGYVQRGGTPCGRDRVLATVLGTAGADLVAKGVFGVMVAAKGDGAEPVPLEEVAGKIRRVPVDHPWIRAAKEVGTGFGD.

Residues G12, 74–75 (RD), and 110–113 (GGGT) contribute to the ATP site. Substrate-binding positions include 133–135 (TID), R170, 177–179 (MGH), E230, R291, and 297–300 (YVQR). D135 (proton acceptor) is an active-site residue.

The protein belongs to the phosphofructokinase type A (PFKA) family. Mixed-substrate PFK group III subfamily. Homodimer or homotetramer. Requires Mg(2+) as cofactor.

The protein localises to the cytoplasm. It catalyses the reaction beta-D-fructose 6-phosphate + ATP = beta-D-fructose 1,6-bisphosphate + ADP + H(+). The protein operates within carbohydrate degradation; glycolysis; D-glyceraldehyde 3-phosphate and glycerone phosphate from D-glucose: step 3/4. Its function is as follows. Catalyzes the phosphorylation of D-fructose 6-phosphate to fructose 1,6-bisphosphate by ATP, the first committing step of glycolysis. The sequence is that of ATP-dependent 6-phosphofructokinase from Propionibacterium freudenreichii subsp. shermanii (strain ATCC 9614 / DSM 4902 / CIP 103027 / NCIMB 8099 / CIRM-BIA1).